The chain runs to 421 residues: Serine--tRNA ligase (421 aa).

Thr232–Glu234 provides a ligand contact to L-serine. Residue Arg262–Glu264 participates in ATP binding. Glu285 contacts L-serine. Residue Glu349–Ser352 participates in ATP binding. Ser384 contributes to the L-serine binding site.

This sequence belongs to the class-II aminoacyl-tRNA synthetase family. Type-1 seryl-tRNA synthetase subfamily. As to quaternary structure, homodimer. The tRNA molecule binds across the dimer.

It localises to the cytoplasm. It catalyses the reaction tRNA(Ser) + L-serine + ATP = L-seryl-tRNA(Ser) + AMP + diphosphate + H(+). It carries out the reaction tRNA(Sec) + L-serine + ATP = L-seryl-tRNA(Sec) + AMP + diphosphate + H(+). The protein operates within aminoacyl-tRNA biosynthesis; selenocysteinyl-tRNA(Sec) biosynthesis; L-seryl-tRNA(Sec) from L-serine and tRNA(Sec): step 1/1. Catalyzes the attachment of serine to tRNA(Ser). Is also able to aminoacylate tRNA(Sec) with serine, to form the misacylated tRNA L-seryl-tRNA(Sec), which will be further converted into selenocysteinyl-tRNA(Sec). The protein is Serine--tRNA ligase of Mycoplasma mobile (strain ATCC 43663 / 163K / NCTC 11711) (Mesomycoplasma mobile).